We begin with the raw amino-acid sequence, 523 residues long: Acetyl-CoA hydrolase (523 aa).

Position 277-281 (277-281) interacts with CoA; sequence GIGNI. Catalysis depends on Glu-302, which acts as the 5-glutamyl coenzyme A thioester intermediate. 2 residues coordinate CoA: Asn-392 and Gly-396.

The protein belongs to the acetyl-CoA hydrolase/transferase family.

The protein localises to the cytoplasm. It catalyses the reaction acetyl-CoA + H2O = acetate + CoA + H(+). Its function is as follows. Presumably involved in regulating the intracellular acetyl-CoA pool for fatty acid and cholesterol synthesis and fatty acid oxidation. The sequence is that of Acetyl-CoA hydrolase (ACH1) from Kluyveromyces lactis (strain ATCC 8585 / CBS 2359 / DSM 70799 / NBRC 1267 / NRRL Y-1140 / WM37) (Yeast).